The chain runs to 72 residues: uncharacterized protein (72 aa).

This sequence belongs to the phage portal family. HK97 subfamily.

This is an uncharacterized protein from Rickettsia conorii (strain ATCC VR-613 / Malish 7).